Consider the following 317-residue polypeptide: 4-hydroxy-3-methylbut-2-enyl diphosphate reductase (317 aa).

Cysteine 12 contacts [4Fe-4S] cluster. (2E)-4-hydroxy-3-methylbut-2-enyl diphosphate is bound by residues histidine 41 and histidine 74. Positions 41 and 74 each coordinate dimethylallyl diphosphate. Isopentenyl diphosphate is bound by residues histidine 41 and histidine 74. A [4Fe-4S] cluster-binding site is contributed by cysteine 96. (2E)-4-hydroxy-3-methylbut-2-enyl diphosphate is bound at residue histidine 124. Residue histidine 124 participates in dimethylallyl diphosphate binding. Histidine 124 provides a ligand contact to isopentenyl diphosphate. The active-site Proton donor is the glutamate 126. Threonine 169 provides a ligand contact to (2E)-4-hydroxy-3-methylbut-2-enyl diphosphate. Residue cysteine 199 participates in [4Fe-4S] cluster binding. 4 residues coordinate (2E)-4-hydroxy-3-methylbut-2-enyl diphosphate: serine 227, serine 228, asparagine 229, and serine 271. 4 residues coordinate dimethylallyl diphosphate: serine 227, serine 228, asparagine 229, and serine 271. Isopentenyl diphosphate-binding residues include serine 227, serine 228, asparagine 229, and serine 271.

It belongs to the IspH family. The cofactor is [4Fe-4S] cluster.

It catalyses the reaction isopentenyl diphosphate + 2 oxidized [2Fe-2S]-[ferredoxin] + H2O = (2E)-4-hydroxy-3-methylbut-2-enyl diphosphate + 2 reduced [2Fe-2S]-[ferredoxin] + 2 H(+). It carries out the reaction dimethylallyl diphosphate + 2 oxidized [2Fe-2S]-[ferredoxin] + H2O = (2E)-4-hydroxy-3-methylbut-2-enyl diphosphate + 2 reduced [2Fe-2S]-[ferredoxin] + 2 H(+). The protein operates within isoprenoid biosynthesis; dimethylallyl diphosphate biosynthesis; dimethylallyl diphosphate from (2E)-4-hydroxy-3-methylbutenyl diphosphate: step 1/1. Its pathway is isoprenoid biosynthesis; isopentenyl diphosphate biosynthesis via DXP pathway; isopentenyl diphosphate from 1-deoxy-D-xylulose 5-phosphate: step 6/6. Catalyzes the conversion of 1-hydroxy-2-methyl-2-(E)-butenyl 4-diphosphate (HMBPP) into a mixture of isopentenyl diphosphate (IPP) and dimethylallyl diphosphate (DMAPP). Acts in the terminal step of the DOXP/MEP pathway for isoprenoid precursor biosynthesis. This Vibrio parahaemolyticus serotype O3:K6 (strain RIMD 2210633) protein is 4-hydroxy-3-methylbut-2-enyl diphosphate reductase.